The following is a 547-amino-acid chain: MFS-type transporter ungB (547 aa).

A run of 14 helical transmembrane segments spans residues 14–34 (LLVTISLCLTLFCVSLDETVL), 50–70 (DVGWYGSSYLFVFTATQMAWG), 80–100 (WVFLTGVTVFEVGSLVCGVSP), 111–131 (IAGLGAGSINAGAVLIISNTI), 138–158 (IYLGCLGVVHGVVSVLGPVIG), 169–189 (WCFFLNLPIGAITVLGIVFCL), 210–230 (LLGSAFFIPGILMLLLALEWG), 238–258 (SWRVILLFVLSAVALAVFAVV), 279–299 (LGLIGYIVGNSGGLFVFVYYL), 316–336 (LAILPTQLGMVAASLAGGILV), 343–363 (TPFLIVSSLLAVAGAGLLSSL), 366–386 (ASGLGSILGYQVVLSVGIGLG), 392–412 (VVPSVVCAPGDVVMAIATLCF), and 475–495 (AVSETFYVGVAMCALSLLGSA). Residues 503–547 (PGHKEATEKVEGEGQGQGQQQEQDQGQGWGEVGESHALAHPTADK) are disordered. Residues 504-514 (GHKEATEKVEG) show a composition bias toward basic and acidic residues.

It belongs to the major facilitator superfamily. TCR/Tet family.

The protein localises to the membrane. In terms of biological role, MFS-type transporter; part of the gene cluster that mediates the biosynthesis of the unguisins, gamma-aminobutyric acid (GABA)-containing fungal cyclic heptapeptides with the amino acid sequence cyclo-(D-Ala1-D-Val2-L-Phe3-D-Val4-D-Ala5-D-Trp6-GABA7) for unguisin A and cyclo-(D-Ala1-D-Val2-L-Leu3-D-Val4-D-Ala5-D-Trp6-GABA7) for unguisin B. May be involved in the secretion of unguisins. The polypeptide is MFS-type transporter ungB (Aspergillus violaceofuscus (strain CBS 115571)).